A 261-amino-acid chain; its full sequence is Eukaryotic translation initiation factor 3 subunit G (261 aa).

Residues 156–180 (QDADSKNALGLRGDGRQMERNRSDE) are disordered. The span at 168–180 (GDGRQMERNRSDE) shows a compositional bias: basic and acidic residues. The RRM domain occupies 181–259 (NTCRVTNLPQ…MVLKVEWTRP (79 aa)).

The protein belongs to the eIF-3 subunit G family. In terms of assembly, component of the eukaryotic translation initiation factor 3 (eIF-3) complex.

The protein localises to the cytoplasm. In terms of biological role, RNA-binding component of the eukaryotic translation initiation factor 3 (eIF-3) complex, which is involved in protein synthesis of a specialized repertoire of mRNAs and, together with other initiation factors, stimulates binding of mRNA and methionyl-tRNAi to the 40S ribosome. The eIF-3 complex specifically targets and initiates translation of a subset of mRNAs involved in cell proliferation. This subunit can bind 18S rRNA. The polypeptide is Eukaryotic translation initiation factor 3 subunit G (Caenorhabditis briggsae).